We begin with the raw amino-acid sequence, 832 residues long: Valine--tRNA ligase (832 aa).

The 'HIGH' region motif lies at 41–51 (PNVTGKLHLGH). Residues 512 to 516 (KMSKS) carry the 'KMSKS' region motif. Lys-515 is a binding site for ATP. Residues 760-831 (FIEISQEQKQ…QIYLEELKWK (72 aa)) adopt a coiled-coil conformation.

It belongs to the class-I aminoacyl-tRNA synthetase family. ValS type 1 subfamily. As to quaternary structure, monomer.

The protein resides in the cytoplasm. It catalyses the reaction tRNA(Val) + L-valine + ATP = L-valyl-tRNA(Val) + AMP + diphosphate. Functionally, catalyzes the attachment of valine to tRNA(Val). As ValRS can inadvertently accommodate and process structurally similar amino acids such as threonine, to avoid such errors, it has a 'posttransfer' editing activity that hydrolyzes mischarged Thr-tRNA(Val) in a tRNA-dependent manner. This chain is Valine--tRNA ligase, found in Mycoplasmopsis synoviae (strain 53) (Mycoplasma synoviae).